A 432-amino-acid chain; its full sequence is D-amino acid dehydrogenase (432 aa).

3–17 (VVILGSGVVGVTSAW) serves as a coordination point for FAD.

Belongs to the DadA oxidoreductase family. FAD serves as cofactor.

It catalyses the reaction a D-alpha-amino acid + A + H2O = a 2-oxocarboxylate + AH2 + NH4(+). Its pathway is amino-acid degradation; D-alanine degradation; NH(3) and pyruvate from D-alanine: step 1/1. Functionally, oxidative deamination of D-amino acids. The polypeptide is D-amino acid dehydrogenase (Citrobacter koseri (strain ATCC BAA-895 / CDC 4225-83 / SGSC4696)).